The chain runs to 235 residues: Protein GrpE (235 aa).

A compositionally biased stretch (polar residues) spans M1–V18. Disordered regions lie at residues M1 to H50 and E198 to S235. Over residues T19–P35 the composition is skewed to basic and acidic residues. Residues A215–S235 are compositionally biased toward polar residues.

Belongs to the GrpE family. Homodimer.

The protein resides in the cytoplasm. Functionally, participates actively in the response to hyperosmotic and heat shock by preventing the aggregation of stress-denatured proteins, in association with DnaK and GrpE. It is the nucleotide exchange factor for DnaK and may function as a thermosensor. Unfolded proteins bind initially to DnaJ; upon interaction with the DnaJ-bound protein, DnaK hydrolyzes its bound ATP, resulting in the formation of a stable complex. GrpE releases ADP from DnaK; ATP binding to DnaK triggers the release of the substrate protein, thus completing the reaction cycle. Several rounds of ATP-dependent interactions between DnaJ, DnaK and GrpE are required for fully efficient folding. In Mycobacterium tuberculosis (strain ATCC 25177 / H37Ra), this protein is Protein GrpE.